The sequence spans 315 residues: Calumenin-A (315 aa).

The first 19 residues, 1–19, serve as a signal peptide directing secretion; it reads MEIRPLLMCFALCVVYATS. EF-hand domains follow at residues 68-103, 104-139, 151-186, 188-223, 229-264, and 265-300; these read ESKN…AQKK, YIYD…TYLD, QMMA…EEYE, MKDI…HEDE, WVAT…ADYD, and HAEA…FVGS. Ca(2+) is bound by residues D81, D83, D85, E92, D117, N119, D121, M123, and E128. N131 is a glycosylation site (N-linked (GlcNAc...) asparagine). Positions 164, 166, 168, 175, 201, 203, 205, 212, 242, 244, 246, 248, 253, 278, 280, 282, 284, and 289 each coordinate Ca(2+). A Prevents secretion from ER motif is present at residues 312–315; the sequence is HDEF.

This sequence belongs to the CREC family. In terms of assembly, interacts with ggcx.

The protein resides in the endoplasmic reticulum membrane. It localises to the golgi apparatus. It is found in the secreted. The protein localises to the melanosome. Its subcellular location is the sarcoplasmic reticulum lumen. Its function is as follows. Involved in regulation of vitamin K-dependent carboxylation of multiple N-terminal glutamate residues. Seems to inhibit gamma-carboxylase ggcx. Binds 7 calcium ions with a low affinity. The protein is Calumenin-A (calua) of Danio rerio (Zebrafish).